The sequence spans 62 residues: Large ribosomal subunit protein eL37 (62 aa).

Positions 20, 23, 35, and 38 each coordinate Zn(2+). Residues 20–38 form a C4-type zinc finger; the sequence is CRRCGRRSYHVRKKACSAC.

This sequence belongs to the eukaryotic ribosomal protein eL37 family. Zn(2+) serves as cofactor.

Its function is as follows. Binds to the 23S rRNA. This chain is Large ribosomal subunit protein eL37, found in Methanococcus aeolicus (strain ATCC BAA-1280 / DSM 17508 / OCM 812 / Nankai-3).